The sequence spans 192 residues: Inner membrane protein YohD (192 aa).

Topologically, residues 1 to 40 (MDLNTLISQYGYAALVIGSLAEGETVTLLGGVAAHQGLLK) are periplasmic. Residues 41–61 (FPLVVLSVALGGMIGDQVLYL) form a helical membrane-spanning segment. Residues 62 to 121 (CGRRFGGKLLRRFSKHQDKIERAQKLIQRHPYLFVIGTRFMYGFRVIGPTLIGASQLPPK) are Cytoplasmic-facing. Residues 122-142 (IFLPLNILGAFAWALIFTTIG) traverse the membrane as a helical segment. Residues 143–159 (YAGGQVIAPWLHNLDQH) lie on the Periplasmic side of the membrane. The chain crosses the membrane as a helical span at residues 160–180 (LKHWVWLILVVVLVVGVRWWL). At 181 to 192 (KRRGKKKPDHQA) the chain is on the cytoplasmic side.

This sequence belongs to the DedA family.

Its subcellular location is the cell inner membrane. This is Inner membrane protein YohD (yohD) from Escherichia coli (strain K12).